The sequence spans 440 residues: Xylose isomerase (440 aa).

Catalysis depends on residues histidine 100 and aspartate 103. Glutamate 231, glutamate 267, histidine 270, aspartate 295, aspartate 306, aspartate 308, and aspartate 338 together coordinate Mg(2+).

Belongs to the xylose isomerase family. As to quaternary structure, homotetramer. Mg(2+) is required as a cofactor.

Its subcellular location is the cytoplasm. The enzyme catalyses alpha-D-xylose = alpha-D-xylulofuranose. This chain is Xylose isomerase, found in Burkholderia multivorans (strain ATCC 17616 / 249).